The chain runs to 377 residues: UPF0754 membrane protein LMOf2365_2257 (377 aa).

A run of 2 helical transmembrane segments spans residues 1–21 (MSVLFTILLMAVIGGFIGAMT) and 357–377 (YLGGILGGFIGIIQGVLAMWI).

The protein belongs to the UPF0754 family.

Its subcellular location is the cell membrane. This Listeria monocytogenes serotype 4b (strain F2365) protein is UPF0754 membrane protein LMOf2365_2257.